Reading from the N-terminus, the 761-residue chain is Zinc finger protein 711 (761 aa).

Glycyl lysine isopeptide (Lys-Gly) (interchain with G-Cter in SUMO2) cross-links involve residues K224, K235, and K296. 5 C2H2-type zinc fingers span residues 383–408 (YPCH…HPDH), 414–436 (YQCT…LESH), 476–499 (HKCK…LAVH), 505–527 (HVCV…MRTH), and 533–556 (YQCQ…KSKH). The interval 515–761 (RHPSELKKHM…IMRHHKEALM (247 aa)) is required for transcriptional activation. The segment at 562–584 (YKCEHCPQAFGDERELQRHLDLF) adopts a C2H2-type 6; atypical zinc-finger fold. Positions 564, 567, and 580 each coordinate Zn(2+). 6 consecutive C2H2-type zinc fingers follow at residues 590-613 (HQCP…ISVH), 619-641 (HKCE…SDIH), 647-670 (HQCR…LSVH), 676-698 (LKCK…MKTH), 704-727 (YQCE…ISIH), and 733-755 (HRCE…IMRH).

This sequence belongs to the krueppel C2H2-type zinc-finger protein family. Interacts with PHF8. Expressed in neural tissues.

It localises to the nucleus. Functionally, transcription regulator required for brain development. Probably acts as a transcription factor that binds to the promoter of target genes and recruits PHF8 histone demethylase, leading to activated expression of genes involved in neuron development, such as KDM5C. May compete with transcription factor ARX for activation of expression of KDM5C. This Homo sapiens (Human) protein is Zinc finger protein 711 (ZNF711).